Here is a 187-residue protein sequence, read N- to C-terminus: Elongation factor P (187 aa).

It belongs to the elongation factor P family.

It is found in the cytoplasm. Its pathway is protein biosynthesis; polypeptide chain elongation. Involved in peptide bond synthesis. Stimulates efficient translation and peptide-bond synthesis on native or reconstituted 70S ribosomes in vitro. Probably functions indirectly by altering the affinity of the ribosome for aminoacyl-tRNA, thus increasing their reactivity as acceptors for peptidyl transferase. This is Elongation factor P from Parafrankia sp. (strain EAN1pec).